The sequence spans 207 residues: Protein GET1 (207 aa).

The Lumenal portion of the chain corresponds to 1 to 4 (MPSL). Residues 5–24 (LISVLFLHIAIYIINTIGAS) traverse the membrane as a helical segment. The Cytoplasmic portion of the chain corresponds to 25–110 (TIDSLLWLIY…LFDVAVKALR (86 aa)). A coiled-coil region spans residues 44-97 (MAREQHQMKLEVVQLKREMNATSSQDEFAKWAKLRRRHDKALEEYEVKNKQFSR). The helical transmembrane segment at 111-131 (WAGTSGLILLLQFWFSKTPIF) threads the bilayer. At 132-155 (TLPPSWIPWQVEWVLSFPRAPMGT) the chain is on the lumenal side. Residues 156-172 (VSIQVWGGACAVMVALV) form a helical membrane-spanning segment. The Cytoplasmic segment spans residues 173–207 (GEAIGATVRYLYGSKDSMEAIKVGAGAVEKEKKRQ).

It belongs to the WRB/GET1 family. As to quaternary structure, interacts with GET3.

It localises to the endoplasmic reticulum membrane. Functionally, required for the post-translational delivery of tail-anchored (TA) proteins to the endoplasmic reticulum. Acts as a membrane receptor for soluble GET3, which recognizes and selectively binds the transmembrane domain of TA proteins in the cytosol. This Paracoccidioides lutzii (strain ATCC MYA-826 / Pb01) (Paracoccidioides brasiliensis) protein is Protein GET1.